The sequence spans 241 residues: MAPK phosphothreonine lyase (241 aa).

The active-site Proton donor is histidine 106. The active-site Proton acceptor is the lysine 136.

Belongs to the phosphothreonine lyase family.

The protein resides in the secreted. In terms of biological role, secreted effector that irreversibly inactivates host MAP kinases by catalyzing the dephosphorylation of the phosphothreonine residue in the pT-X-pY motif present in MAPKs, via a beta-elimination reaction leading to a dehydrobutyrine residue. This is MAPK phosphothreonine lyase (spvC) from Salmonella enteritidis.